A 358-amino-acid chain; its full sequence is UDP-N-acetylglucosamine--N-acetylmuramyl-(pentapeptide) pyrophosphoryl-undecaprenol N-acetylglucosamine transferase (358 aa).

Ser197 and Gln288 together coordinate UDP-N-acetyl-alpha-D-glucosamine.

Belongs to the glycosyltransferase 28 family. MurG subfamily.

Its subcellular location is the cell membrane. It carries out the reaction Mur2Ac(oyl-L-Ala-gamma-D-Glu-L-Lys-D-Ala-D-Ala)-di-trans,octa-cis-undecaprenyl diphosphate + UDP-N-acetyl-alpha-D-glucosamine = beta-D-GlcNAc-(1-&gt;4)-Mur2Ac(oyl-L-Ala-gamma-D-Glu-L-Lys-D-Ala-D-Ala)-di-trans,octa-cis-undecaprenyl diphosphate + UDP + H(+). It participates in cell wall biogenesis; peptidoglycan biosynthesis. Its function is as follows. Cell wall formation. Catalyzes the transfer of a GlcNAc subunit on undecaprenyl-pyrophosphoryl-MurNAc-pentapeptide (lipid intermediate I) to form undecaprenyl-pyrophosphoryl-MurNAc-(pentapeptide)GlcNAc (lipid intermediate II). The sequence is that of UDP-N-acetylglucosamine--N-acetylmuramyl-(pentapeptide) pyrophosphoryl-undecaprenol N-acetylglucosamine transferase from Streptococcus agalactiae serotype Ia (strain ATCC 27591 / A909 / CDC SS700).